The sequence spans 311 residues: Pyrimidine-specific ribonucleoside hydrolase RihA (311 aa).

The active site involves His240.

The protein belongs to the IUNH family. RihA subfamily.

Its function is as follows. Hydrolyzes with equal efficiency cytidine or uridine to ribose and cytosine or uracil, respectively. This Escherichia coli O7:K1 (strain IAI39 / ExPEC) protein is Pyrimidine-specific ribonucleoside hydrolase RihA.